We begin with the raw amino-acid sequence, 136 residues long: Large ribosomal subunit protein uL16c (136 aa).

The protein belongs to the universal ribosomal protein uL16 family. As to quaternary structure, part of the 50S ribosomal subunit.

Its subcellular location is the plastid. The protein localises to the chloroplast. The protein is Large ribosomal subunit protein uL16c of Oryza nivara (Indian wild rice).